The primary structure comprises 610 residues: Diol dehydratase-reactivating factor large subunit (610 aa).

11 to 13 (NSS) provides a ligand contact to ATP. Threonine 105, aspartate 166, and aspartate 183 together coordinate Mg(2+). Residues 459-462 (EEIK), 557-558 (GS), and arginine 591 each bind ATP.

Belongs to the DdrA/PduG family. In terms of assembly, component of the DDR complex, a heterotetramer of DdrA(2)/DdrB(2). The DDR complex interacts with the diol dehydratase complex in the presence of ADP but not ATP. Requires Mg(2+) as cofactor.

It catalyses the reaction ATP + H2O = ADP + phosphate + H(+). Large subunit of the diol dehydratase-reactivating factor (DDR), which reactivates suicidally inhibited adenosylcobalamin-dependent diol dehydratase (DD, pddA, pddB, pddC). DDR acts as a chaperone, reactivating inactivated DD holoenzyme in the presence of ATP, Mg(2+) and free adenosylcobalamin (AdoCbl), by mediating the exchange of the tightly bound damaged cofactor AdoCbl for a free intact one. Reactivation takes place in two steps: ADP-dependent cobalamin release, then ATP-dependent dissociation of the DD apoenzyme-DDR complex. DDR has weak ATPase activity which is required for DD reactivation. This subunit contains the adenosine nucleotide binding site. Activates glycerol-inactivated, O2-inactivated holoenzyme and inactivated enzyme-cyanocobalamin complex. Also reactivates glycerol-inactivated hologlycerol dehydratase, a DD isozyme. The sequence is that of Diol dehydratase-reactivating factor large subunit from Klebsiella michiganensis (strain ATCC 8724 / DSM 4798 / JCM 20051 / NBRC 3318 / NRRL B-199 / KCTC 1686 / BUCSAV 143 / CCM 1901).